Here is a 290-residue protein sequence, read N- to C-terminus: Protease HtpX (290 aa).

The next 2 membrane-spanning stretches (helical) occupy residues 4-24 (IMLF…TLKL) and 36-56 (GSLL…SLFI). Residue His-142 coordinates Zn(2+). Glu-143 is an active-site residue. Residue His-146 coordinates Zn(2+). The next 2 membrane-spanning stretches (helical) occupy residues 150-170 (GDMV…MFFA) and 193-213 (FIAT…IVMW). A Zn(2+)-binding site is contributed by Glu-219.

Belongs to the peptidase M48B family. Zn(2+) is required as a cofactor.

The protein resides in the cell inner membrane. The protein is Protease HtpX of Ectopseudomonas mendocina (strain ymp) (Pseudomonas mendocina).